The sequence spans 45 residues: Ribosome-inactivating protein TAP-29 (45 aa).

It belongs to the ribosome-inactivating protein family. Type 1 RIP subfamily.

The catalysed reaction is Endohydrolysis of the N-glycosidic bond at one specific adenosine on the 28S rRNA.. Its function is as follows. Capable of inhibiting HIV-1 infection and replication. It inactivates eukaryotic 60S ribosomal subunits. This is Ribosome-inactivating protein TAP-29 from Trichosanthes kirilowii (Chinese snake gourd).